Here is a 206-residue protein sequence, read N- to C-terminus: 3-demethoxyubiquinol 3-hydroxylase (206 aa).

Fe cation is bound by residues glutamate 55, glutamate 85, histidine 88, glutamate 137, glutamate 169, and histidine 172.

Belongs to the COQ7 family. It depends on Fe cation as a cofactor.

Its subcellular location is the cell membrane. It catalyses the reaction a 5-methoxy-2-methyl-3-(all-trans-polyprenyl)benzene-1,4-diol + AH2 + O2 = a 3-demethylubiquinol + A + H2O. It functions in the pathway cofactor biosynthesis; ubiquinone biosynthesis. Its function is as follows. Catalyzes the hydroxylation of 2-nonaprenyl-3-methyl-6-methoxy-1,4-benzoquinol during ubiquinone biosynthesis. The protein is 3-demethoxyubiquinol 3-hydroxylase of Aromatoleum aromaticum (strain DSM 19018 / LMG 30748 / EbN1) (Azoarcus sp. (strain EbN1)).